The following is a 258-amino-acid chain: Transcription initiation factor TFIID subunit 9B (258 aa).

Methionine 1 is subject to N-acetylmethionine. A Phosphoserine modification is found at serine 147. Phosphothreonine occurs at positions 159 and 174. At serine 177 the chain carries Phosphoserine. Residues 227 to 236 are compositionally biased toward polar residues; sequence SSQSTATDSN. The segment at 227-258 is disordered; the sequence is SSQSTATDSNPLKRKHDDDDDDDDDDDDNDTM. Over residues 244-258 the composition is skewed to acidic residues; the sequence is DDDDDDDDDDDNDTM.

This sequence belongs to the TAF9 family. In terms of assembly, binds TAF5 and TAF6. Component of TFIID and the TATA-binding protein-free TAF complex (TFTC). TFIID is composed of TATA binding protein (TBP) and a number of TBP-associated factors (TAFs). Binds N-terminal domain of p53/TP53 which is essential for transcription.

The protein localises to the nucleus. Its function is as follows. Essential for cell viability. TAF9 and TAF9L are involved in transcriptional activation as well as repression of distinct but overlapping sets of genes. May have a role in gene regulation associated with apoptosis. TAFs are components of the transcription factor IID (TFIID) complex, the TBP-free TAFII complex (TFTC), the PCAF histone acetylase complex and the STAGA transcription coactivator-HAT complex. TFIID or TFTC are essential for the regulation of RNA polymerase II-mediated transcription. The protein is Transcription initiation factor TFIID subunit 9B (Taf9b) of Rattus norvegicus (Rat).